We begin with the raw amino-acid sequence, 233 residues long: Large ribosomal subunit protein uL1 (233 aa).

It belongs to the universal ribosomal protein uL1 family. In terms of assembly, part of the 50S ribosomal subunit.

In terms of biological role, binds directly to 23S rRNA. The L1 stalk is quite mobile in the ribosome, and is involved in E site tRNA release. Functionally, protein L1 is also a translational repressor protein, it controls the translation of the L11 operon by binding to its mRNA. The sequence is that of Large ribosomal subunit protein uL1 from Rhizobium etli (strain CIAT 652).